The primary structure comprises 252 residues: Fructose-1,6-bisphosphatase/inositol-1-monophosphatase (252 aa).

Mg(2+) contacts are provided by aspartate 38, threonine 40, glutamate 67, aspartate 82, leucine 84, and aspartate 85. Residues 85–87 (DGT), arginine 167, alanine 172, and arginine 191 each bind substrate. A Mg(2+)-binding site is contributed by aspartate 200.

The protein belongs to the inositol monophosphatase superfamily. FBPase class 4 family. Homodimer. The cofactor is Mg(2+). Mn(2+) is required as a cofactor.

The enzyme catalyses beta-D-fructose 1,6-bisphosphate + H2O = beta-D-fructose 6-phosphate + phosphate. It carries out the reaction a myo-inositol phosphate + H2O = myo-inositol + phosphate. Its activity is regulated as follows. Both FBPase and IMPase activities are inhibited by Ca(2+). In contrast to mammalian I-1-P phosphatases, is only very weakly inhibited by Li(+) (with an IC(50) of about 290 mM). Phosphatase with broad specificity; it can dephosphorylate fructose 1,6-bisphosphate, both D and L isomers of inositol-1-phosphate (I-1-P), 2'-AMP, pNPP, inositol-2-phosphate, beta-glycerol phosphate, and alpha-D-glucose-1-phosphate. Cannot hydrolyze glucose-6-phosphate and fructose-6-phosphate. May be involved in the biosynthesis of a unique osmolyte, di-myo-inositol 1,1-phosphate. The sequence is that of Fructose-1,6-bisphosphatase/inositol-1-monophosphatase (suhB) from Archaeoglobus fulgidus (strain ATCC 49558 / DSM 4304 / JCM 9628 / NBRC 100126 / VC-16).